The primary structure comprises 95 residues: Oxytetracycline polyketide synthase acyl carrier protein (95 aa).

In terms of domain architecture, Carrier spans 3-81; it reads LLTLSDLLTL…ALIEMTNASL (79 aa). At serine 41 the chain carries O-(pantetheine 4'-phosphoryl)serine.

In terms of processing, 4'-phosphopantetheine is transferred from CoA to a specific serine of the apo-ACP-like protein.

It functions in the pathway antibiotic biosynthesis; oxytetracycline biosynthesis. Functionally, acyl carrier protein. The chain is Oxytetracycline polyketide synthase acyl carrier protein from Streptomyces rimosus.